The chain runs to 288 residues: Threonine-rich protein (288 aa).

The first 20 residues, 1–20 (MKAFLLSLATLLACIVLTES), serve as a signal peptide directing secretion. The span at 141-150 (TTVTPQTTDG) shows a compositional bias: polar residues. The segment at 141-260 (TTVTPQTTDG…PAPTTTPAPT (120 aa)) is disordered. The segment covering 151-253 (NTTTEAPTST…TAAPTTTPAP (103 aa)) has biased composition (low complexity).

As to expression, component of the acid-insoluble and acid-soluble organic matrix of the aragonitic skeleton (at protein level).

It localises to the secreted. The protein is Threonine-rich protein of Acropora millepora (Staghorn coral).